Consider the following 452-residue polypeptide: Probable E3 ubiquitin-protein ligase ARI15 (452 aa).

Residues Ser22–Ala256 are TRIAD supradomain. Cys26, Cys29, Cys54, His56, Cys59, Cys62, Cys83, Cys88, Cys128, Cys133, Cys154, Cys156, Cys161, Cys164, His169, Cys174, Cys208, Cys211, Cys229, Cys231, Cys236, Cys239, His246, and Cys252 together coordinate Zn(2+). Residues Cys26 to Cys88 form an RING-type 1 zinc finger. An IBR-type zinc finger spans residues Ala106–Cys174. An RING-type 2; atypical zinc finger spans residues Cys208–Cys239. The segment at Asn414–Ser445 adopts a RanBP2-type zinc-finger fold.

It belongs to the RBR family. Ariadne subfamily. It depends on Zn(2+) as a cofactor. Ubiquitous.

It carries out the reaction [E2 ubiquitin-conjugating enzyme]-S-ubiquitinyl-L-cysteine + [acceptor protein]-L-lysine = [E2 ubiquitin-conjugating enzyme]-L-cysteine + [acceptor protein]-N(6)-ubiquitinyl-L-lysine.. It participates in protein modification; protein ubiquitination. Functionally, might act as an E3 ubiquitin-protein ligase, or as part of E3 complex, which accepts ubiquitin from specific E2 ubiquitin-conjugating enzymes and then transfers it to substrates. This is Probable E3 ubiquitin-protein ligase ARI15 (ARI15) from Arabidopsis thaliana (Mouse-ear cress).